The chain runs to 657 residues: WD repeat-containing protein 70 (657 aa).

Disordered stretches follow at residues 1–21 (MEHS…DPQL) and 43–172 (FEQT…PVQR). The span at 45–78 (QTRRTAVERSRKTLEAREKEEEMNREKELRKQIE) shows a compositional bias: basic and acidic residues. Residues 82-105 (PAPSSSSAARERSQSSCRDTSSSD) show a composition bias toward low complexity. Acidic residues-rich tracts occupy residues 106-119 (SESD…DDEL) and 150-168 (EEGE…EEDN). WD repeat units follow at residues 183 to 222 (HGTK…ASFK), 230 to 271 (CECH…ECIK), 284 to 324 (GHTA…KQKS), 333 to 372 (GKKV…HPKF), 379 to 418 (DPGT…KPLF), 424 to 469 (PTLF…RVYE), and 472 to 511 (ITDA…QRGA). Residue Lys299 forms a Glycyl lysine isopeptide (Lys-Gly) (interchain with G-Cter in SUMO2) linkage. Lys455 is subject to N6-acetyllysine. Over residues 543–568 (REPRQRSTRKQLEKDRLDPLKSHKPE) the composition is skewed to basic and acidic residues. Residues 543 to 584 (REPRQRSTRKQLEKDRLDPLKSHKPEPPVAGPGRGGRVGTHG) are disordered. The span at 574–584 (PGRGGRVGTHG) shows a compositional bias: gly residues. Thr582 carries the phosphothreonine modification. Glycyl lysine isopeptide (Lys-Gly) (interchain with G-Cter in SUMO2) cross-links involve residues Lys593 and Lys599. Phosphoserine occurs at positions 624 and 641. Positions 634-657 (TMFAQVESDDEESKNEPEWKKRKI) are disordered. Residues 647–657 (KNEPEWKKRKI) show a composition bias toward basic and acidic residues.

Belongs to the WD repeat GAD-1 family.

In Mus musculus (Mouse), this protein is WD repeat-containing protein 70 (Wdr70).